The sequence spans 264 residues: tRNA pseudouridine synthase A (264 aa).

Aspartate 51 acts as the Nucleophile in catalysis. Tyrosine 109 contributes to the substrate binding site.

The protein belongs to the tRNA pseudouridine synthase TruA family. In terms of assembly, homodimer.

The enzyme catalyses uridine(38/39/40) in tRNA = pseudouridine(38/39/40) in tRNA. In terms of biological role, formation of pseudouridine at positions 38, 39 and 40 in the anticodon stem and loop of transfer RNAs. The sequence is that of tRNA pseudouridine synthase A from Photorhabdus laumondii subsp. laumondii (strain DSM 15139 / CIP 105565 / TT01) (Photorhabdus luminescens subsp. laumondii).